We begin with the raw amino-acid sequence, 320 residues long: Ferrochelatase (320 aa).

Fe cation-binding residues include His-194 and Glu-275.

Belongs to the ferrochelatase family.

It localises to the cytoplasm. The enzyme catalyses heme b + 2 H(+) = protoporphyrin IX + Fe(2+). The protein operates within porphyrin-containing compound metabolism; protoheme biosynthesis; protoheme from protoporphyrin-IX: step 1/1. Catalyzes the ferrous insertion into protoporphyrin IX. This is Ferrochelatase from Stenotrophomonas maltophilia (strain R551-3).